Consider the following 504-residue polypeptide: Cytochrome P450 2D10 (504 aa).

Residue Ser249 is modified to Phosphoserine. Cys446 lines the heme pocket.

The protein belongs to the cytochrome P450 family. It depends on heme as a cofactor.

It localises to the endoplasmic reticulum membrane. The protein localises to the microsome membrane. It catalyses the reaction an organic molecule + reduced [NADPH--hemoprotein reductase] + O2 = an alcohol + oxidized [NADPH--hemoprotein reductase] + H2O + H(+). Cytochromes P450 are a group of heme-thiolate monooxygenases. In liver microsomes, this enzyme is involved in an NADPH-dependent electron transport pathway. It oxidizes a variety of structurally unrelated compounds, including steroids, fatty acids, and xenobiotics. The sequence is that of Cytochrome P450 2D10 (Cyp2d10) from Mus musculus (Mouse).